A 364-amino-acid chain; its full sequence is Geranylgeranyl pyrophosphate synthase janG (364 aa).

Isopentenyl diphosphate contacts are provided by Lys-83, Arg-86, and His-115. Positions 122 and 126 each coordinate Mg(2+). Residue Arg-131 participates in dimethylallyl diphosphate binding. Residue Arg-132 coordinates isopentenyl diphosphate. Dimethylallyl diphosphate-binding residues include Lys-209, Thr-210, and Gln-243. Asp-246 provides a ligand contact to Mg(2+). The dimethylallyl diphosphate site is built by Asn-250, Lys-260, and Lys-270.

It belongs to the FPP/GGPP synthase family. Mg(2+) is required as a cofactor.

The catalysed reaction is isopentenyl diphosphate + dimethylallyl diphosphate = (2E)-geranyl diphosphate + diphosphate. It catalyses the reaction isopentenyl diphosphate + (2E)-geranyl diphosphate = (2E,6E)-farnesyl diphosphate + diphosphate. The enzyme catalyses isopentenyl diphosphate + (2E,6E)-farnesyl diphosphate = (2E,6E,10E)-geranylgeranyl diphosphate + diphosphate. The protein operates within secondary metabolite biosynthesis. In terms of biological role, geranylgeranyl pyrophosphate synthase; part of the gene cluster that mediates the biosynthesis of the indole diterpenes janthitremanes such as shearinine K or shearinine A. The geranylgeranyl diphosphate (GGPP) synthase janG catalyzes the first step in janthitremane biosynthesis via conversion of farnesyl pyrophosphate and isopentyl pyrophosphate into geranylgeranyl pyrophosphate (GGPP). Condensation of indole-3-glycerol phosphate with GGPP by the prenyl transferase janC then forms 3-geranylgeranylindole (3-GGI). Epoxidation by the FAD-dependent monooxygenase janM leads to a epoxidized-GGI that is substrate of the terpene cyclase janB for cyclization to yield paspaline. Paspaline is subsequently converted to 13-desoxypaspaline by the cytochrome P450 monooxygenase janP, via beta-PC-M6 in a series of alpha-face oxidations. The cytochrome P450 monooxygenase janQ is proposed to carry out sequential beta-face oxidation steps at C-7 and C-13 of 13-desoxypaspaline to form paspalicine and paspalinine respectively. The indole diterpene prenyltransferase janD may then convert paspalinine into shearinine K which is substrate of janO and/or additional enzymes for oxidation and cyclization to generate shearinine A. The sequence is that of Geranylgeranyl pyrophosphate synthase janG from Penicillium janthinellum (Penicillium vitale).